Here is a 64-residue protein sequence, read N- to C-terminus: Photosystem II reaction center protein J (64 aa).

A helical transmembrane segment spans residues 35 to 55; that stretch reads LWLVATAGGIAVIFVLGIFFY.

This sequence belongs to the PsbJ family. PSII is composed of 1 copy each of membrane proteins PsbA, PsbB, PsbC, PsbD, PsbE, PsbF, PsbH, PsbI, PsbJ, PsbK, PsbL, PsbM, PsbT, PsbX, PsbY, Psb30/Ycf12, peripheral proteins PsbO, CyanoQ (PsbQ), PsbU, PsbV and a large number of cofactors. It forms dimeric complexes.

It localises to the cellular thylakoid membrane. Functionally, one of the components of the core complex of photosystem II (PSII). PSII is a light-driven water:plastoquinone oxidoreductase that uses light energy to abstract electrons from H(2)O, generating O(2) and a proton gradient subsequently used for ATP formation. It consists of a core antenna complex that captures photons, and an electron transfer chain that converts photonic excitation into a charge separation. This chain is Photosystem II reaction center protein J, found in Prochlorococcus marinus (strain MIT 9515).